The following is a 364-amino-acid chain: Aminomethyltransferase (364 aa).

This sequence belongs to the GcvT family. In terms of assembly, the glycine cleavage system is composed of four proteins: P, T, L and H.

It catalyses the reaction N(6)-[(R)-S(8)-aminomethyldihydrolipoyl]-L-lysyl-[protein] + (6S)-5,6,7,8-tetrahydrofolate = N(6)-[(R)-dihydrolipoyl]-L-lysyl-[protein] + (6R)-5,10-methylene-5,6,7,8-tetrahydrofolate + NH4(+). In terms of biological role, the glycine cleavage system catalyzes the degradation of glycine. In Shewanella loihica (strain ATCC BAA-1088 / PV-4), this protein is Aminomethyltransferase.